A 597-amino-acid chain; its full sequence is Protein disulfide isomerase-like 1-4 (597 aa).

An N-terminal signal peptide occupies residues 1–25 (MAFRVLLLFSLTALLIFSAVSPSFA). Composition is skewed to acidic residues over residues 37-49 (LSFL…DDVP) and 61-84 (DEFE…EGDF). Residues 37–101 (LSFLEDLKED…SDPLPTPEID (65 aa)) form a disordered region. The 124-residue stretch at 85-208 (SDLGNPDSDP…IVTWVKKKIG (124 aa)) folds into the Thioredoxin 1 domain. An N-linked (GlcNAc...) asparagine glycan is attached at Asn112. Active-site nucleophile residues include Cys132 and Cys135. The cysteines at positions 132 and 135 are disulfide-linked. N-linked (GlcNAc...) asparagine glycans are attached at residues Asn213 and Asn342. In terms of domain architecture, Thioredoxin 2 spans 429-550 (FYKSDPIPEK…FYKFLRKHAT (122 aa)). Residues Cys471 and Cys474 each act as nucleophile in the active site. Cys471 and Cys474 are oxidised to a cystine. N-linked (GlcNAc...) asparagine glycosylation is present at Asn524. Residues 555–597 (LEKPASTESPKTAESTPKVETTETKESPDSTTKSSQSDSKDEL) are disordered. Residues 560–573 (STESPKTAESTPKV) are compositionally biased toward polar residues. Residues 594-597 (KDEL) carry the Prevents secretion from ER motif.

Belongs to the protein disulfide isomerase family. As to quaternary structure, interacts with MEE8 and MED37A. As to expression, expressed in germinating seedling, including the cotyledons and hypocotyl, in vascular tissues, in pollen grains, root tips, leaf trichomes, developing seeds and siliques.

It localises to the endoplasmic reticulum lumen. It is found in the golgi apparatus. The protein resides in the vacuole. Its subcellular location is the nucleus. The protein localises to the secreted. It localises to the cell wall. It catalyses the reaction Catalyzes the rearrangement of -S-S- bonds in proteins.. In terms of biological role, acts as a protein-folding catalyst that interacts with nascent polypeptides to catalyze the formation, isomerization, and reduction or oxidation of disulfide bonds. The polypeptide is Protein disulfide isomerase-like 1-4 (PDIL1-4) (Arabidopsis thaliana (Mouse-ear cress)).